Here is an 885-residue protein sequence, read N- to C-terminus: Cytosolic carboxypeptidase-like protein 5 (885 aa).

The region spanning 150–576 (YPFSYAECQD…AVAVAALDMA (427 aa)) is the Peptidase M14 domain. Residues His-247 and Glu-250 each coordinate Zn(2+). Disordered stretches follow at residues 341–364 (SGSALKTSNQSNTSPPVATPTERE) and 392–428 (ESWEKSGVQREAEHSDENESAQSRGETNSAPSEQVPP). The span at 344–356 (ALKTSNQSNTSPP) shows a compositional bias: polar residues. A compositionally biased stretch (basic and acidic residues) spans 393-408 (SWEKSGVQREAEHSDE). Positions 411–428 (SAQSRGETNSAPSEQVPP) are enriched in polar residues. His-440 provides a ligand contact to Zn(2+). Catalysis depends on Glu-522, which acts as the Proton donor/acceptor. The span at 606-668 (STGLTSNNRR…KSSPSFTFGT (63 aa)) shows a compositional bias: polar residues. Disordered stretches follow at residues 606–788 (STGL…RTAL) and 866–885 (ALLKNSSRQTDQHIHRSLPT). A compositionally biased stretch (basic and acidic residues) spans 682 to 691 (RECKAQEKRR). Over residues 712 to 749 (LSAPVRAPLSPSSSSSSSSSSPSSSSSAPGPGSISLAG) the composition is skewed to low complexity.

It belongs to the peptidase M14 family. Requires Zn(2+) as cofactor.

It localises to the cytoplasm. The protein resides in the cytosol. It is found in the nucleus. Its subcellular location is the cytoskeleton. The protein localises to the spindle. It localises to the midbody. The enzyme catalyses gamma-L-glutamyl-L-glutamyl-[protein] + H2O = L-glutamyl-[protein] + L-glutamate. It catalyses the reaction (L-glutamyl)(n+1)-gamma-L-glutamyl-L-glutamyl-[protein] + H2O = (L-glutamyl)(n)-gamma-L-glutamyl-L-glutamyl-[protein] + L-glutamate. It carries out the reaction C-terminal L-alpha-aminoacyl-L-glutamyl-[tubulin] + H2O = C-terminal L-alpha-aminoacyl-[tubulin] + L-glutamate. The catalysed reaction is C-terminal L-alpha-aminoacyl-L-glutamyl-L-glutamyl-[tubulin] + H2O = C-terminal L-alpha-aminoacyl-L-glutamyl-[tubulin] + L-glutamate. Functionally, metallocarboxypeptidase that mediates deglutamylation of tubulin and non-tubulin target proteins. Catalyzes the removal of polyglutamate side chains present on the gamma-carboxyl group of glutamate residues within the C-terminal tail of alpha- and beta-tubulin. Cleaves alpha- and gamma-linked polyglutamate tubulin side-chain, as well as the branching point glutamate. Also catalyzes the removal of alpha-linked glutamate residues from the carboxy-terminus of alpha-tubulin. The polypeptide is Cytosolic carboxypeptidase-like protein 5 (agbl5) (Danio rerio (Zebrafish)).